The chain runs to 201 residues: 3-isopropylmalate dehydratase small subunit (201 aa).

The protein belongs to the LeuD family. LeuD type 1 subfamily. As to quaternary structure, heterodimer of LeuC and LeuD.

The catalysed reaction is (2R,3S)-3-isopropylmalate = (2S)-2-isopropylmalate. It participates in amino-acid biosynthesis; L-leucine biosynthesis; L-leucine from 3-methyl-2-oxobutanoate: step 2/4. Catalyzes the isomerization between 2-isopropylmalate and 3-isopropylmalate, via the formation of 2-isopropylmaleate. The chain is 3-isopropylmalate dehydratase small subunit from Salmonella paratyphi A (strain ATCC 9150 / SARB42).